Here is an 82-residue protein sequence, read N- to C-terminus: Small ribosomal subunit protein bS16 (82 aa).

This sequence belongs to the bacterial ribosomal protein bS16 family.

The protein is Small ribosomal subunit protein bS16 of Glaesserella parasuis serovar 5 (strain SH0165) (Haemophilus parasuis).